The chain runs to 335 residues: Phenylalanine--tRNA ligase alpha subunit (335 aa).

Residue glutamate 262 coordinates Mg(2+).

Belongs to the class-II aminoacyl-tRNA synthetase family. Phe-tRNA synthetase alpha subunit type 1 subfamily. Tetramer of two alpha and two beta subunits. Mg(2+) serves as cofactor.

It localises to the cytoplasm. The catalysed reaction is tRNA(Phe) + L-phenylalanine + ATP = L-phenylalanyl-tRNA(Phe) + AMP + diphosphate + H(+). This is Phenylalanine--tRNA ligase alpha subunit from Prochlorococcus marinus (strain NATL2A).